The sequence spans 116 residues: NADH-ubiquinone oxidoreductase chain 3 (116 aa).

A run of 3 helical transmembrane segments spans residues 3–23 (LITT…TISF), 56–76 (FFLI…LLPL), and 87–107 (LTLI…IYEW).

This sequence belongs to the complex I subunit 3 family.

The protein resides in the mitochondrion membrane. The enzyme catalyses a ubiquinone + NADH + 5 H(+)(in) = a ubiquinol + NAD(+) + 4 H(+)(out). Functionally, core subunit of the mitochondrial membrane respiratory chain NADH dehydrogenase (Complex I) that is believed to belong to the minimal assembly required for catalysis. Complex I functions in the transfer of electrons from NADH to the respiratory chain. The immediate electron acceptor for the enzyme is believed to be ubiquinone. This Oncorhynchus mykiss (Rainbow trout) protein is NADH-ubiquinone oxidoreductase chain 3 (MT-ND3).